We begin with the raw amino-acid sequence, 497 residues long: UPF0371 protein DIP2346 (497 aa).

Belongs to the UPF0371 family.

This chain is UPF0371 protein DIP2346, found in Corynebacterium diphtheriae (strain ATCC 700971 / NCTC 13129 / Biotype gravis).